Consider the following 469-residue polypeptide: IME2-dependent-signaling protein (469 aa).

Met-1 bears the N-acetylmethionine mark. Thr-13 is modified (phosphothreonine). Disordered stretches follow at residues Lys-22–Met-55, Ala-67–Gln-92, and Asp-117–Thr-143. Residues Ser-23, Ser-27, and Ser-39 each carry the phosphoserine modification. Composition is skewed to polar residues over residues Ser-25–Gly-42 and Ala-67–Gln-82. Residues Ser-122, Ser-130, Ser-136, Ser-147, and Ser-148 each carry the phosphoserine modification.

In terms of biological role, seems to act indirectly to modify IME2 activity, thus permitting IME2 to carry out later meiotic functions. The polypeptide is IME2-dependent-signaling protein (IDS2) (Saccharomyces cerevisiae (strain ATCC 204508 / S288c) (Baker's yeast)).